We begin with the raw amino-acid sequence, 1191 residues long: DNA-directed RNA polymerase II subunit RPB2 (1191 aa).

A Mg(2+)-binding site is contributed by D799. A disordered region spans residues 842–903 (ASTMGMRHGS…RKDHSTSLRH (62 aa)). Residues 878–891 (TPISQDDAQGQASR) show a composition bias toward polar residues. Over residues 893–903 (TRKDHSTSLRH) the composition is skewed to basic and acidic residues. Residues C1123, C1126, C1141, and C1144 each coordinate Zn(2+). Residues 1123-1144 (CERCGLIAIANLKKNSFECRGC) form a C4-type zinc finger.

The protein belongs to the RNA polymerase beta chain family. In terms of assembly, component of the RNA polymerase II (Pol II) complex consisting of 12 subunits.

The protein resides in the nucleus. It catalyses the reaction RNA(n) + a ribonucleoside 5'-triphosphate = RNA(n+1) + diphosphate. In terms of biological role, DNA-dependent RNA polymerase catalyzes the transcription of DNA into RNA using the four ribonucleoside triphosphates as substrates. Second largest component of RNA polymerase II which synthesizes mRNA precursors and many functional non-coding RNAs. Proposed to contribute to the polymerase catalytic activity and forms the polymerase active center together with the largest subunit. Pol II is the central component of the basal RNA polymerase II transcription machinery. It is composed of mobile elements that move relative to each other. RPB2 is part of the core element with the central large cleft, the clamp element that moves to open and close the cleft and the jaws that are thought to grab the incoming DNA template. The chain is DNA-directed RNA polymerase II subunit RPB2 (RPB2) from Solanum lycopersicum (Tomato).